The chain runs to 421 residues: D-amino acid dehydrogenase (421 aa).

An FAD-binding site is contributed by 4–18 (VLVLGSGVVGLTSAW).

The protein belongs to the DadA oxidoreductase family. Requires FAD as cofactor.

The enzyme catalyses a D-alpha-amino acid + A + H2O = a 2-oxocarboxylate + AH2 + NH4(+). It participates in amino-acid degradation; D-alanine degradation; NH(3) and pyruvate from D-alanine: step 1/1. Functionally, oxidative deamination of D-amino acids. This is D-amino acid dehydrogenase from Vibrio cholerae serotype O1 (strain ATCC 39541 / Classical Ogawa 395 / O395).